The following is a 188-amino-acid chain: UPF0301 protein PD_1276 (188 aa).

Belongs to the UPF0301 (AlgH) family.

This chain is UPF0301 protein PD_1276, found in Xylella fastidiosa (strain Temecula1 / ATCC 700964).